The chain runs to 287 residues: Fructose-1,6-bisphosphatase class 1 (287 aa).

Mg(2+) contacts are provided by glutamate 67, aspartate 87, leucine 89, and aspartate 90. Substrate contacts are provided by residues 90–93, tyrosine 195, and lysine 225; that span reads DGSS. Residue glutamate 231 participates in Mg(2+) binding.

The protein belongs to the FBPase class 1 family. As to quaternary structure, homotetramer. Mg(2+) is required as a cofactor.

Its subcellular location is the cytoplasm. The enzyme catalyses beta-D-fructose 1,6-bisphosphate + H2O = beta-D-fructose 6-phosphate + phosphate. It functions in the pathway carbohydrate biosynthesis; gluconeogenesis. The sequence is that of Fructose-1,6-bisphosphatase class 1 from Halobacterium salinarum (strain ATCC 29341 / DSM 671 / R1).